Consider the following 345-residue polypeptide: UDP-3-O-acylglucosamine N-acyltransferase (345 aa).

The active-site Proton acceptor is the histidine 239.

It belongs to the transferase hexapeptide repeat family. LpxD subfamily. Homotrimer.

The enzyme catalyses a UDP-3-O-[(3R)-3-hydroxyacyl]-alpha-D-glucosamine + a (3R)-hydroxyacyl-[ACP] = a UDP-2-N,3-O-bis[(3R)-3-hydroxyacyl]-alpha-D-glucosamine + holo-[ACP] + H(+). It functions in the pathway bacterial outer membrane biogenesis; LPS lipid A biosynthesis. In terms of biological role, catalyzes the N-acylation of UDP-3-O-acylglucosamine using 3-hydroxyacyl-ACP as the acyl donor. Is involved in the biosynthesis of lipid A, a phosphorylated glycolipid that anchors the lipopolysaccharide to the outer membrane of the cell. This is UDP-3-O-acylglucosamine N-acyltransferase from Geobacter metallireducens (strain ATCC 53774 / DSM 7210 / GS-15).